Consider the following 256-residue polypeptide: CD209 antigen-like protein 2 (256 aa).

Residues 1 to 50 (MSDSKEPRAQPLGLLEEEELITSSMNFFPRDFGFRQTRGYKSLAGCLGHA) are Cytoplasmic-facing. An Endocytosis signal motif is present at residues 14–15 (LL). A helical; Signal-anchor for type II membrane protein transmembrane segment spans residues 51-71 (PLVLPLLFFTLFTGLLVAILV). At 72 to 240 (QVSKNPSSQR…KSAASCSRDE (169 aa)) the chain is on the extracellular side. Cystine bridges form between C108-C119, C136-C229, and C208-C221. Positions 114–230 (FFQGNCYFIS…CSAAKFWICK (117 aa)) constitute a C-type lectin domain. Residues E199, N201, I203, E206, N217, and D218 each coordinate Ca(2+).

Predominantly expressed in liver and axillary lymph nodes. At very low levels also found in other tissues.

The protein resides in the membrane. Functionally, probable pathogen-recognition receptor involved in peripheral immune surveillance in liver. May mediate the endocytosis of pathogens which are subsequently degraded in lysosomal compartments. Probably recognizes in a calcium-dependent manner high mannose N-linked oligosaccharides in a variety of pathogen antigens. Is a receptor for ICAM3, probably by binding to mannose-like carbohydrates. In Macaca mulatta (Rhesus macaque), this protein is CD209 antigen-like protein 2 (CD209L2).